A 132-amino-acid chain; its full sequence is Extracellular small neutral protease (132 aa).

Ca(2+) contacts are provided by Asp-76 and Thr-78. His-83 provides a ligand contact to Zn(2+). The active site involves Glu-84. Zn(2+)-binding residues include His-87 and Asp-93. Cysteines 99 and 112 form a disulfide.

The protein belongs to the peptidase M7 family. The cofactor is Ca(2+). Requires Zn(2+) as cofactor.

Its subcellular location is the secreted. It catalyses the reaction Hydrolyzes proteins with a preference for Tyr or Phe in the P1' position. Has no action on amino-acid p-nitroanilides.. In terms of biological role, specifically hydrolyzes the peptide bond at the imino side of aromatic residues. The sequence is that of Extracellular small neutral protease (snpA) from Streptomyces caespitosus.